A 528-amino-acid chain; its full sequence is (R)-citramalate synthase (528 aa).

In terms of domain architecture, Pyruvate carboxyltransferase spans 5 to 271; sequence VYIYDTTLRD…IPQENLKKLT (267 aa).

This sequence belongs to the alpha-IPM synthase/homocitrate synthase family.

It catalyses the reaction pyruvate + acetyl-CoA + H2O = (3R)-citramalate + CoA + H(+). Its pathway is amino-acid biosynthesis; L-isoleucine biosynthesis; 2-oxobutanoate from pyruvate: step 1/3. In terms of biological role, catalyzes the condensation of pyruvate and acetyl-coenzyme A to form (R)-citramalate. In Aquifex aeolicus (strain VF5), this protein is (R)-citramalate synthase.